A 675-amino-acid polypeptide reads, in one-letter code: Potassium-transporting ATPase ATP-binding subunit (675 aa).

A run of 4 helical transmembrane segments spans residues 34-54, 65-85, 216-236, and 245-265; these read IMFV…FPDI, LITI…SEAF, IALF…IVTL, and LILP…TTIG. Asp-304 (4-aspartylphosphate intermediate) is an active-site residue. ATP-binding positions include Asp-341, Glu-345, 372 to 379, and Lys-390; that span reads FTAETRMS. Residues Asp-513 and Asp-517 each contribute to the Mg(2+) site. The next 3 helical transmembrane spans lie at 569-591, 611-631, and 644-664; these read ALTT…ALMM, AIIS…PIAM, and IFIN…FLGI.

It belongs to the cation transport ATPase (P-type) (TC 3.A.3) family. Type IA subfamily. The system is composed of three essential subunits: KdpA, KdpB and KdpC.

It localises to the cell membrane. The enzyme catalyses K(+)(out) + ATP + H2O = K(+)(in) + ADP + phosphate + H(+). In terms of biological role, part of the high-affinity ATP-driven potassium transport (or Kdp) system, which catalyzes the hydrolysis of ATP coupled with the electrogenic transport of potassium into the cytoplasm. This subunit is responsible for energy coupling to the transport system and for the release of the potassium ions to the cytoplasm. In Staphylococcus aureus (strain bovine RF122 / ET3-1), this protein is Potassium-transporting ATPase ATP-binding subunit.